A 166-amino-acid chain; its full sequence is Interferon gamma (166 aa).

An N-terminal signal peptide occupies residues 1-23 (MKYTSYILAFQLCVVLGSLGCYC). Position 24 is a pyrrolidone carboxylic acid (Gln24). Asn48, Asn86, and Asn120 each carry an N-linked (GlcNAc...) asparagine glycan.

Belongs to the type II (or gamma) interferon family. Homodimer. Interacts with IFNGR1 (via extracellular domain); this interaction promotes IFNGR1 dimerization. In terms of tissue distribution, released primarily from activated T lymphocytes.

It is found in the secreted. Type II interferon produced by immune cells such as T-cells and NK cells that plays crucial roles in antimicrobial, antiviral, and antitumor responses by activating effector immune cells and enhancing antigen presentation. Primarily signals through the JAK-STAT pathway after interaction with its receptor IFNGR1 to affect gene regulation. Upon IFNG binding, IFNGR1 intracellular domain opens out to allow association of downstream signaling components JAK2, JAK1 and STAT1, leading to STAT1 activation, nuclear translocation and transcription of IFNG-regulated genes. Many of the induced genes are transcription factors such as IRF1 that are able to further drive regulation of a next wave of transcription. Plays a role in class I antigen presentation pathway by inducing a replacement of catalytic proteasome subunits with immunoproteasome subunits. In turn, increases the quantity, quality, and repertoire of peptides for class I MHC loading. Increases the efficiency of peptide generation also by inducing the expression of activator PA28 that associates with the proteasome and alters its proteolytic cleavage preference. Up-regulates as well MHC II complexes on the cell surface by promoting expression of several key molecules such as cathepsins B/CTSB, H/CTSH, and L/CTSL. Participates in the regulation of hematopoietic stem cells during development and under homeostatic conditions by affecting their development, quiescence, and differentiation. This is Interferon gamma (IFNG) from Callithrix jacchus (White-tufted-ear marmoset).